The following is a 745-amino-acid chain: VCP-like ATPase (745 aa).

ATP is bound by residues 231-238 (GPPGTGKT) and 508-515 (GPPGVGKT).

It belongs to the AAA ATPase family. CDC48 subfamily. In terms of assembly, homohexamer. Forms a ring-shaped particle.

In Thermoplasma acidophilum (strain ATCC 25905 / DSM 1728 / JCM 9062 / NBRC 15155 / AMRC-C165), this protein is VCP-like ATPase (vat).